Consider the following 428-residue polypeptide: Exodeoxyribonuclease 7 large subunit (428 aa).

Belongs to the XseA family. As to quaternary structure, heterooligomer composed of large and small subunits.

The protein resides in the cytoplasm. It catalyses the reaction Exonucleolytic cleavage in either 5'- to 3'- or 3'- to 5'-direction to yield nucleoside 5'-phosphates.. In terms of biological role, bidirectionally degrades single-stranded DNA into large acid-insoluble oligonucleotides, which are then degraded further into small acid-soluble oligonucleotides. This is Exodeoxyribonuclease 7 large subunit from Mycobacterium leprae (strain TN).